Consider the following 720-residue polypeptide: Phosphoribosylformylglycinamidine synthase subunit PurL (720 aa).

The active site involves His34. Residue Tyr37 participates in ATP binding. Glu83 is a binding site for Mg(2+). Substrate is bound by residues 84–87 (SHNH) and Arg106. The active-site Proton acceptor is His85. Asp107 is a Mg(2+) binding site. Residue Gln231 coordinates substrate. Mg(2+) is bound at residue Asp259. Residue 303–305 (ESQ) coordinates substrate. ATP contacts are provided by Asp480 and Gly517. Position 518 (Asn518) interacts with Mg(2+). Residue Ser520 participates in substrate binding.

Belongs to the FGAMS family. As to quaternary structure, monomer. Part of the FGAM synthase complex composed of 1 PurL, 1 PurQ and 2 PurS subunits.

The protein localises to the cytoplasm. The enzyme catalyses N(2)-formyl-N(1)-(5-phospho-beta-D-ribosyl)glycinamide + L-glutamine + ATP + H2O = 2-formamido-N(1)-(5-O-phospho-beta-D-ribosyl)acetamidine + L-glutamate + ADP + phosphate + H(+). The protein operates within purine metabolism; IMP biosynthesis via de novo pathway; 5-amino-1-(5-phospho-D-ribosyl)imidazole from N(2)-formyl-N(1)-(5-phospho-D-ribosyl)glycinamide: step 1/2. In terms of biological role, part of the phosphoribosylformylglycinamidine synthase complex involved in the purines biosynthetic pathway. Catalyzes the ATP-dependent conversion of formylglycinamide ribonucleotide (FGAR) and glutamine to yield formylglycinamidine ribonucleotide (FGAM) and glutamate. The FGAM synthase complex is composed of three subunits. PurQ produces an ammonia molecule by converting glutamine to glutamate. PurL transfers the ammonia molecule to FGAR to form FGAM in an ATP-dependent manner. PurS interacts with PurQ and PurL and is thought to assist in the transfer of the ammonia molecule from PurQ to PurL. The chain is Phosphoribosylformylglycinamidine synthase subunit PurL from Haloarcula marismortui (strain ATCC 43049 / DSM 3752 / JCM 8966 / VKM B-1809) (Halobacterium marismortui).